The sequence spans 957 residues: Kinesin heavy chain isoform 5C (957 aa).

The Kinesin motor domain maps to 8–327 (SIKVMCRFRP…LMFGQRAKTI (320 aa)). Residues Q87, S89, S90, G91, K92, T93, H94, and K99 each contribute to the ATP site. The segment at 174 to 315 (VSSPEEVMDV…PSVFNEAETK (142 aa)) is microtubule-binding. Residues 406–923 (VAGISTEEKE…ARRAHSAQIA (518 aa)) are a coiled coil. The interval 859 to 956 (RCELPKLEKR…GSSSNSTHYQ (98 aa)) is globular. The tract at residues 911–957 (KNMARRAHSAQIAKPIRPGHYPASSPTAVHAIRGGGGSSSNSTHYQK) is disordered.

The protein belongs to the TRAFAC class myosin-kinesin ATPase superfamily. Kinesin family. Kinesin subfamily. As to quaternary structure, oligomer composed of two heavy chains and two light chains. Interacts with GRIP1 and KLC3. Interacts with TRAK1. Interacts with ZFYVE27. As to expression, highest expression in brain, prostate and testis, and moderate expression in kidney, small intestine and ovary.

Its subcellular location is the cytoplasm. The protein resides in the cytoskeleton. It is found in the cell projection. It localises to the dendrite. The catalysed reaction is ATP + H2O = ADP + phosphate + H(+). In terms of biological role, microtubule-associated force-producing protein that may play a role in organelle transport. Has ATPase activity. Involved in synaptic transmission. Mediates dendritic trafficking of mRNAs. Required for anterograde axonal transportation of MAPK8IP3/JIP3 which is essential for MAPK8IP3/JIP3 function in axon elongation. This is Kinesin heavy chain isoform 5C (KIF5C) from Homo sapiens (Human).